Consider the following 472-residue polypeptide: RNA pseudouridine synthase 6, chloroplastic (472 aa).

The N-terminal 66 residues, 1-66 (MASPALTGGY…TDSQNQTTLS (66 aa)), are a transit peptide targeting the chloroplast. Residues 101–208 (VLVSEFISKQ…SPRCYEIDWK (108 aa)) form the S4 RNA-binding domain. Aspartate 261 is an active-site residue.

Belongs to the pseudouridine synthase RluA family.

The protein resides in the plastid. The protein localises to the chloroplast. It carries out the reaction a uridine in RNA = a pseudouridine in RNA. This chain is RNA pseudouridine synthase 6, chloroplastic, found in Arabidopsis thaliana (Mouse-ear cress).